The primary structure comprises 195 residues: MKSLKGTKTAENLMKAFAGESQARNRYTFYSNTAKKEGYVQISNIFLETAENERMHAKRFFKFLSEGLDDEAVEINGASYPTTLGDTKKNLIAAAKGENEEWTDLYPSFAKTAEDEGFKGVAAAFRLIAAVEKEHEKRYNALLKNIEENKVFEKDEVKFWKCIKCGYIFEGKTAPKVCPACLHPQAYFEILSENY.

The 148-residue stretch at 3-150 folds into the Ferritin-like diiron domain; sequence SLKGTKTAEN…ALLKNIEENK (148 aa). Glu20, Glu53, Glu98, Glu101, Glu132, His135, Cys162, Cys165, Cys178, and Cys181 together coordinate Fe(3+). One can recognise a Rubredoxin-like domain in the interval 157-191; sequence VKFWKCIKCGYIFEGKTAPKVCPACLHPQAYFEIL.

As to quaternary structure, homodimer. It depends on Fe(3+) as a cofactor.

It catalyses the reaction H2O2 + NADH + H(+) = NAD(+) + 2 H2O. With respect to regulation, rubredoxin (Rd) increases the NADH consumption rate by serving as an intermediary electron-transfer shuttle between NROR and RubY. Functionally, functions as the terminal component of an NADH peroxidase (NADH:H(2)O(2) oxidoreductase) when using NADH:rubredoxin oxidoreductase (NROR) as the electron transport intermediary from NADH to RubY. The polypeptide is Rubrerythrin-1 (rbr1) (Clostridium acetobutylicum (strain ATCC 824 / DSM 792 / JCM 1419 / IAM 19013 / LMG 5710 / NBRC 13948 / NRRL B-527 / VKM B-1787 / 2291 / W)).